We begin with the raw amino-acid sequence, 235 residues long: Nucleoside diphosphate kinase 4, chloroplastic (235 aa).

ATP is bound by residues K93, F141, R169, T175, R186, and N196. Catalysis depends on H199, which acts as the Pros-phosphohistidine intermediate.

This sequence belongs to the NDK family. Homohexamer. Requires Mg(2+) as cofactor.

It is found in the plastid. The protein localises to the chloroplast thylakoid lumen. The enzyme catalyses a 2'-deoxyribonucleoside 5'-diphosphate + ATP = a 2'-deoxyribonucleoside 5'-triphosphate + ADP. The catalysed reaction is a ribonucleoside 5'-diphosphate + ATP = a ribonucleoside 5'-triphosphate + ADP. Functionally, major role in the synthesis of nucleoside triphosphates other than ATP. The ATP gamma phosphate is transferred to the NDP beta phosphate via a ping-pong mechanism, using a phosphorylated active-site intermediate. Shows the highest specificity towards GDP. This chain is Nucleoside diphosphate kinase 4, chloroplastic (NDK4), found in Spinacia oleracea (Spinach).